A 502-amino-acid polypeptide reads, in one-letter code: tRNA-specific adenosine deaminase 1 (502 aa).

The A to I editase domain occupies 63 to 501 (SMGTGTKCIG…IRNPPDYHQF (439 aa)). Histidine 87 contacts Zn(2+). Glutamate 89 functions as the Proton donor in the catalytic mechanism. Residues arginine 93 and arginine 94 each coordinate 1D-myo-inositol hexakisphosphate. Cysteine 142 serves as a coordination point for Zn(2+). The interval 174-194 (SSNLEAPGNERKCEDPDSPVT) is disordered. A Phosphoserine modification is found at serine 191. Cysteine 299 is a Zn(2+) binding site. 1D-myo-inositol hexakisphosphate is bound by residues lysine 302, arginine 305, lysine 435, and lysine 470.

It belongs to the ADAT1 family. The cofactor is 1D-myo-inositol hexakisphosphate. In terms of tissue distribution, ubiquitously expressed.

The enzyme catalyses adenosine(37) in tRNA(Ala) + H2O + H(+) = inosine(37) in tRNA(Ala) + NH4(+). Functionally, specifically deaminates adenosine-37 to inosine in tRNA-Ala. This chain is tRNA-specific adenosine deaminase 1 (ADAT1), found in Homo sapiens (Human).